The sequence spans 249 residues: Seipin homolog (249 aa).

Over 1-10 (MGYLVKLFKL) the chain is Cytoplasmic. A helical transmembrane segment spans residues 11-31 (VVWMLVIGLFSIPSLVSYVIF). Residues 32–212 (YDTVIPHSVI…GMRWFMYTHK (181 aa)) are Lumenal-facing. Residues 213–233 (VSAFLVFTSLFWFTGITSTII) traverse the membrane as a helical segment. Residues 234 to 249 (TYLIVSSTSETKATRR) lie on the Cytoplasmic side of the membrane.

Belongs to the seipin family.

The protein resides in the endoplasmic reticulum membrane. Its function is as follows. Involved in lipid metabolism and lipid droplet (LD) morphology, number, and size. Facilitates initiation of LD formation, and ensures that vectorial budding of LDs from the ER is directed towards the cytoplasm. The sequence is that of Seipin homolog from Schizosaccharomyces pombe (strain 972 / ATCC 24843) (Fission yeast).